Here is a 354-residue protein sequence, read N- to C-terminus: Kelch domain-containing protein 8B (354 aa).

Kelch repeat units follow at residues 1–31 (MSAGGGRAFAWQVFPPMPTCRVYGTVAHQDG), 32–79 (HLLV…VLGK), 81–127 (VLVV…ERDG), 128–175 (MVYA…LHGN), 176–222 (KIYV…MAEG), 224–281 (VFSL…SLGG), 282–329 (HIVA…QAGP), and 331–354 (LFVIGGVAQGPSQAVEALCLRDGV).

Its subcellular location is the cytoplasm. It is found in the midbody. Functionally, involved in pinching off the separated nuclei at the cleavage furrow and in cytokinesis. Required for mitotic integrity and maintenance of chromosomal stability. Protects cells against mitotic errors, centrosomal amplification, micronucleus formation and aneuploidy. Plays a key role of midbody function involving abscission of the daughter cells during cytokinesis and appropriate chromosomal and nuclear segregation into the daughter cells. In Homo sapiens (Human), this protein is Kelch domain-containing protein 8B.